We begin with the raw amino-acid sequence, 411 residues long: Lissencephaly-1 homolog (411 aa).

The region spanning 9–41 is the LisH domain; the sequence is QREELNQAIADYLGSNGYADSLETFRKEADLST. Residues 56–83 are a coiled coil; it reads TSVIRLQKKVMDLEAKLTEAEKEVIEGA. WD repeat units lie at residues 106 to 147, 148 to 187, 191 to 230, 233 to 272, 275 to 334, 337 to 376, and 379 to 411; these read GHRA…RSLK, GHTD…ECVK, GHDH…CVKT, GHRE…CKVE, DHEH…CLLT, GHDN…CMKT, and AHQH…WECR.

Belongs to the WD repeat LIS1/nudF family.

It is found in the cytoplasm. The protein localises to the cytoskeleton. Its subcellular location is the microtubule organizing center. It localises to the centrosome. Positively regulates the activity of the minus-end directed microtubule motor protein dynein. May enhance dynein-mediated microtubule sliding by targeting dynein to the microtubule plus end. Required for several dynein- and microtubule-dependent processes. The polypeptide is Lissencephaly-1 homolog (Drosophila mojavensis (Fruit fly)).